The sequence spans 410 residues: MASNGSFSAQRNANAGTTMKRRNDNRGYGGGIGCYQEERNRYAPPQKRFRSQLQQQFRSGHNPLYHYGSNTNNNVSRVSSQSYNNYGVDVIASNSSFALPNNDSNTNNYQKPFVVYGNPNPQIVPLPLPYRKLDPLDSLPQWVPNSTPNYPVRSSNFVPNTPDFTNVQNPMNHSNMVSVVSQSMHQPIVLSKELTDLLSLLNNEKEKKTSEASNNDSLPVGLSFDNPSSLNVRHESVIKSLYSDMPRQCTSCGVRFKCQEEHSKHMDWHVRKNRSVKTTTRLGQQPKKSRGWLASASLWLCAPTGGGTVEVASFGGGEMQKKNEKDQVQKQHMVPADEDQKNCALCVEPFEEFFSHEADDWMYKDAVYLTKNGRIVHVKCMPEPRPAKDLREPSRVMSVTVPSVAKAILC.

Over residues 1–17 (MASNGSFSAQRNANAGT) the composition is skewed to polar residues. A disordered region spans residues 1–32 (MASNGSFSAQRNANAGTTMKRRNDNRGYGGGI). Residues 191–214 (SKELTDLLSLLNNEKEKKTSEASN) are a coiled coil. The segment at 247 to 269 (RQCTSCGVRFKCQEEHSKHMDWH) adopts a C2H2-type zinc-finger fold.

Forms a complex with cleavage and polyadenylation specificity factor (CPSF) subunits CSTF77, CLPS3, PCFS4 and PCFS1.

The protein resides in the nucleus. This is Polyadenylation and cleavage factor homolog 5 from Arabidopsis thaliana (Mouse-ear cress).